The chain runs to 233 residues: Large ribosomal subunit protein uL1 (233 aa).

The protein belongs to the universal ribosomal protein uL1 family. In terms of assembly, part of the 50S ribosomal subunit.

Its function is as follows. Binds directly to 23S rRNA. The L1 stalk is quite mobile in the ribosome, and is involved in E site tRNA release. In terms of biological role, protein L1 is also a translational repressor protein, it controls the translation of the L11 operon by binding to its mRNA. The polypeptide is Large ribosomal subunit protein uL1 (Campylobacter curvus (strain 525.92)).